Consider the following 333-residue polypeptide: Gamma-D-glutamyl-L-lysine dipeptidyl-peptidase (333 aa).

Positions 1–23 (MKKVGTAFLTTLFIFSSFTSAHA) are cleaved as a signal peptide. Residues Glu83, Tyr118, 237 to 239 (DCS), and 256 to 257 (DS) contribute to the substrate site. Residues 208-332 (TPAADDLINT…EEYAGARRYL (125 aa)) form the NlpC/P60 domain. Cys238 functions as the Nucleophile in the catalytic mechanism. Catalysis depends on His291, which acts as the Proton acceptor. His303 is a catalytic residue.

This sequence belongs to the peptidase C40 family. Monomer in solution.

The catalysed reaction is The enzyme releases L-Ala-gamma-D-Glu dipeptides from cell wall peptides via cleavage of an L-Ala-gamma-D-Glu-|-L-Lys bond.. It participates in cell wall degradation; peptidoglycan degradation. Specifically hydrolyzes gamma-D-glutamyl-L-lysine bonds in murein peptides, releasing L-Ala-D-Glu. The protein is Gamma-D-glutamyl-L-lysine dipeptidyl-peptidase of Bacillus cereus (strain ATCC 10987 / NRS 248).